The primary structure comprises 677 residues: DNA ligase (677 aa).

NAD(+)-binding positions include 34–38 (DAEYD), 83–84 (SL), and E117. K119 functions as the N6-AMP-lysine intermediate in the catalytic mechanism. R140, E175, K283, and K307 together coordinate NAD(+). 4 residues coordinate Zn(2+): C401, C404, C419, and C425. The BRCT domain occupies 594-677 (SHLSLLHGKT…QYISPNTNEN (84 aa)).

The protein belongs to the NAD-dependent DNA ligase family. LigA subfamily. Mg(2+) is required as a cofactor. Requires Mn(2+) as cofactor.

It catalyses the reaction NAD(+) + (deoxyribonucleotide)n-3'-hydroxyl + 5'-phospho-(deoxyribonucleotide)m = (deoxyribonucleotide)n+m + AMP + beta-nicotinamide D-nucleotide.. Functionally, DNA ligase that catalyzes the formation of phosphodiester linkages between 5'-phosphoryl and 3'-hydroxyl groups in double-stranded DNA using NAD as a coenzyme and as the energy source for the reaction. It is essential for DNA replication and repair of damaged DNA. The chain is DNA ligase from Ehrlichia canis (strain Jake).